The sequence spans 48 residues: Delta-stichotoxin-Hmg4a (48 aa).

3 cysteine pairs are disulfide-bonded: C3–C43, C5–C33, and C26–C44.

The protein belongs to the sea anemone sodium channel inhibitory toxin family. Type II subfamily.

It is found in the secreted. Its subcellular location is the nematocyst. Functionally, binds specifically to voltage-gated sodium channels (Nav), thereby delaying their inactivation during signal transduction. Its toxicity is weaker than that of RpIII (AC P08380). The sequence is that of Delta-stichotoxin-Hmg4a from Heteractis magnifica (Magnificent sea anemone).